Reading from the N-terminus, the 428-residue chain is 3-phosphoshikimate 1-carboxyvinyltransferase (428 aa).

3-phosphoshikimate contacts are provided by Lys19, Ser20, and Arg24. A phosphoenolpyruvate-binding site is contributed by Lys19. Residues Gly91 and Arg119 each coordinate phosphoenolpyruvate. Ser164, Gln166, Asp312, and Lys339 together coordinate 3-phosphoshikimate. Gln166 serves as a coordination point for phosphoenolpyruvate. Catalysis depends on Asp312, which acts as the Proton acceptor. Residues Arg343 and Arg386 each coordinate phosphoenolpyruvate.

The protein belongs to the EPSP synthase family. Monomer.

Its subcellular location is the cytoplasm. It catalyses the reaction 3-phosphoshikimate + phosphoenolpyruvate = 5-O-(1-carboxyvinyl)-3-phosphoshikimate + phosphate. The protein operates within metabolic intermediate biosynthesis; chorismate biosynthesis; chorismate from D-erythrose 4-phosphate and phosphoenolpyruvate: step 6/7. Catalyzes the transfer of the enolpyruvyl moiety of phosphoenolpyruvate (PEP) to the 5-hydroxyl of shikimate-3-phosphate (S3P) to produce enolpyruvyl shikimate-3-phosphate and inorganic phosphate. The protein is 3-phosphoshikimate 1-carboxyvinyltransferase of Bacillus subtilis (strain 168).